The sequence spans 741 residues: Nuclear pore complex protein Nup88 (741 aa).

At Ala-2 the chain carries N-acetylalanine. Phosphoserine is present on residues Ser-35, Ser-50, Ser-379, Ser-437, Ser-442, and Ser-517. Thr-525 is modified (phosphothreonine). Position 540 is a phosphoserine (Ser-540). Residues 585-651 (EEIQRRVKLL…KLLHSFHSEL (67 aa)) are a coiled coil. Ser-698 bears the Phosphoserine mark.

Interacts with NUP214/CAN. Interacts with NUP62 and NUP98. As to expression, ubiquitous.

Its subcellular location is the nucleus. It is found in the nuclear pore complex. In terms of biological role, component of nuclear pore complex. The protein is Nuclear pore complex protein Nup88 (NUP88) of Homo sapiens (Human).